The chain runs to 261 residues: MKIVLKIGGAALENKDLVGQFCTTVASLAKDGHHVLVVHGGGAALSRTLKELGIEPKFLNGLRVTDARTRDVALMVLGGLLNKQLAAAIGAVGQPAIGLCGSDLHLCVARKKPLAEDLGFVGEIASVNEEAIAHLWANNAVPVVASLAQGADGEFYNINADEMASALAAACIADTLIFLTDVPGVKDANGDVLNRLGLDRIESLIANGIVSGGMLPKLEACKRALQAGVGSVRILPATKAEALPSLFESPIAFGTELVATV.

Substrate-binding positions include 41 to 42 (GG), arginine 63, and asparagine 157.

This sequence belongs to the acetylglutamate kinase family. ArgB subfamily.

The protein resides in the cytoplasm. The enzyme catalyses N-acetyl-L-glutamate + ATP = N-acetyl-L-glutamyl 5-phosphate + ADP. It functions in the pathway amino-acid biosynthesis; L-arginine biosynthesis; N(2)-acetyl-L-ornithine from L-glutamate: step 2/4. Catalyzes the ATP-dependent phosphorylation of N-acetyl-L-glutamate. The sequence is that of Acetylglutamate kinase from Koribacter versatilis (strain Ellin345).